We begin with the raw amino-acid sequence, 453 residues long: Protein LIAT1 (453 aa).

Positions 1–152 are disordered; it reads METRGPGLAV…HLPSDSSTVS (152 aa). Residues 82–103 form a lysine-rich domain region; it reads KRKVKKKKRKKKTKGSGKGDDK. Over residues 83–96 the composition is skewed to basic residues; the sequence is RKVKKKKRKKKTKG. Residues 106 to 117 show a composition bias toward low complexity; sequence SQSLKSQPLSSS. A compositionally biased stretch (basic and acidic residues) spans 125–145; the sequence is CKERGPKPEHRQSKVEKKHLP. The tract at residues 145–197 is interaction with ATE1; the sequence is PSDSSTVSLPDFAEIENLANRINESLRWDGILADPEAEKERIRIYKLNRRKRY. Tandem repeats lie at residues 201-210, 211-220, 221-230, 231-240, 241-250, 251-260, 261-270, 271-280, 281-290, 291-300, 301-310, 311-320, 321-330, 331-340, 341-350, 351-360, 361-370, 371-380, 381-390, and 391-400. Residues 201–400 form a 20 X 10 AA approximate tandem repeat of A-L-K-G-F-H-P-D-P-E region; that stretch reads ALKGFHPDPE…ALKGFHTDPN (200 aa). Disordered stretches follow at residues 225 to 306 and 320 to 432; these read FHPD…KGFH and EALK…CPNL. Basic and acidic residues predominate over residues 320 to 396; sequence EALKGFHPDP…PDPEALKGFH (77 aa).

In terms of assembly, self-associates (via Lys-rich domain); targets LIAT1 to the nucleolus. Interacts with ATE1; it is not a substrate of ATE1, the interaction takes place in the cytoplasm and seems to increase ATE1 arginyltransferase activity. Interacts with JMJD6 and MRPS14. Post-translationally modified by JMJD6 lysyl-hydroxylase activity at its Lys-rich domain, which inhibits its self-association and nucleolar localization.

The protein resides in the nucleus. Its subcellular location is the nucleolus. It is found in the cytoplasm. Its function is as follows. Participates in nucleolar liquid-liquid phase separation (LLPS) through its N-terminal intrinsically disordered region (IDR). May be involved in ATE1-mediated N-terminal arginylation. This chain is Protein LIAT1, found in Homo sapiens (Human).